Reading from the N-terminus, the 138-residue chain is ATP synthase epsilon chain (138 aa).

Belongs to the ATPase epsilon chain family. F-type ATPases have 2 components, CF(1) - the catalytic core - and CF(0) - the membrane proton channel. CF(1) has five subunits: alpha(3), beta(3), gamma(1), delta(1), epsilon(1). CF(0) has three main subunits: a, b and c.

The protein resides in the cell inner membrane. Produces ATP from ADP in the presence of a proton gradient across the membrane. This chain is ATP synthase epsilon chain, found in Geobacter sp. (strain M21).